A 203-amino-acid polypeptide reads, in one-letter code: Proteasome subunit beta 2 (203 aa).

A propeptide spans 1–9 (MGEEVSIGA) (removed in mature form; by autocatalysis). Threonine 10 acts as the Nucleophile in catalysis.

It belongs to the peptidase T1B family. In terms of assembly, the 20S proteasome core is composed of 14 alpha and 14 beta subunits that assemble into four stacked heptameric rings, resulting in a barrel-shaped structure. The two inner rings, each composed of seven catalytic beta subunits, are sandwiched by two outer rings, each composed of seven alpha subunits. The catalytic chamber with the active sites is on the inside of the barrel. Has a gated structure, the ends of the cylinder being occluded by the N-termini of the alpha-subunits. Is capped at one or both ends by the proteasome regulatory ATPase, PAN.

The protein localises to the cytoplasm. It catalyses the reaction Cleavage of peptide bonds with very broad specificity.. Its activity is regulated as follows. The formation of the proteasomal ATPase PAN-20S proteasome complex, via the docking of the C-termini of PAN into the intersubunit pockets in the alpha-rings, triggers opening of the gate for substrate entry. Interconversion between the open-gate and close-gate conformations leads to a dynamic regulation of the 20S proteasome proteolysis activity. In terms of biological role, component of the proteasome core, a large protease complex with broad specificity involved in protein degradation. This Pyrobaculum calidifontis (strain DSM 21063 / JCM 11548 / VA1) protein is Proteasome subunit beta 2.